A 454-amino-acid chain; its full sequence is Allantoinase (454 aa).

His60, His62, Lys147, His183, His239, and Asp312 together coordinate Zn(2+). Position 147 is an N6-carboxylysine (Lys147).

This sequence belongs to the metallo-dependent hydrolases superfamily. Allantoinase family. Homotetramer. The cofactor is Zn(2+). Post-translationally, carboxylation allows a single lysine to coordinate two zinc ions.

It carries out the reaction (S)-allantoin + H2O = allantoate + H(+). It functions in the pathway nitrogen metabolism; (S)-allantoin degradation; allantoate from (S)-allantoin: step 1/1. Catalyzes the conversion of allantoin (5-ureidohydantoin) to allantoic acid by hydrolytic cleavage of the five-member hydantoin ring. In Bacillus velezensis (strain DSM 23117 / BGSC 10A6 / LMG 26770 / FZB42) (Bacillus amyloliquefaciens subsp. plantarum), this protein is Allantoinase.